Reading from the N-terminus, the 1855-residue chain is Chitin synthase 5 (1855 aa).

The region spanning 1-778 is the Myosin motor domain; sequence MSSAPTTQQN…CWRQIVRAGD (778 aa). Position 95 to 102 (95 to 102) interacts with ATP; sequence GESGTGKT. N-linked (GlcNAc...) asparagine glycans are attached at residues Asn-221, Asn-520, and Asn-558. The tract at residues 585–650 is disordered; the sequence is AVQQASVASK…PKSADTQQGA (66 aa). An actin-binding region spans residues 658–682; that stretch reads LDNINKSLTAPNTNPYFFFCLKPND. An N-linked (GlcNAc...) asparagine glycan is attached at Asn-662. The next 2 membrane-spanning stretches (helical) occupy residues 887–907 and 922–942; these read WLVL…RIIG and VAIN…MVGF. Residues 950 to 1008 form the Cytochrome b5 heme-binding domain; it reads QHVFSPSELTSYDGKNSDAYVAIRGNVFDLGAFIPQHYPSIVPASALEKYAGTDATNLF. 2 N-linked (GlcNAc...) asparagine glycosylation sites follow: Asn-1037 and Asn-1061. Residues 1199 to 1219 traverse the membrane as a helical segment; it reads ILLAVSIMLVSVICFKFLAAL. Asn-1422, Asn-1456, and Asn-1562 each carry an N-linked (GlcNAc...) asparagine glycan. Helical transmembrane passes span 1587–1607, 1621–1641, and 1650–1670; these read FVVF…GYIV, ATTA…IFIV, and WMII…LIAF. 2 N-linked (GlcNAc...) asparagine glycosylation sites follow: Asn-1755 and Asn-1767. The DEK-C domain maps to 1797 to 1852; it reads MPNDDAILAEIREILATADLMTVTKKSIKAELERRFGVPMDSRRQYIGSATEAILS.

In the N-terminal section; belongs to the TRAFAC class myosin-kinesin ATPase superfamily. Myosin family. The protein in the C-terminal section; belongs to the chitin synthase family. Class V subfamily.

Its subcellular location is the apical cell membrane. The protein localises to the cell septum. The protein resides in the cell tip. The catalysed reaction is [(1-&gt;4)-N-acetyl-beta-D-glucosaminyl](n) + UDP-N-acetyl-alpha-D-glucosamine = [(1-&gt;4)-N-acetyl-beta-D-glucosaminyl](n+1) + UDP + H(+). In terms of biological role, polymerizes chitin, a structural polymer of the cell wall and septum, by transferring the sugar moiety of UDP-GlcNAc to the non-reducing end of the growing chitin polymer. This chain is Chitin synthase 5, found in Zymoseptoria tritici (strain CBS 115943 / IPO323) (Speckled leaf blotch fungus).